The chain runs to 458 residues: Argininosuccinate lyase (458 aa).

This sequence belongs to the lyase 1 family. Argininosuccinate lyase subfamily.

It localises to the cytoplasm. The catalysed reaction is 2-(N(omega)-L-arginino)succinate = fumarate + L-arginine. Its pathway is amino-acid biosynthesis; L-arginine biosynthesis; L-arginine from L-ornithine and carbamoyl phosphate: step 3/3. This chain is Argininosuccinate lyase, found in Heliobacterium mobile (Heliobacillus mobilis).